Consider the following 567-residue polypeptide: Signal transducer and activator of transcription b (567 aa).

One can recognise an SH2 domain in the interval 449–548 (WYDGLVYGFC…LGGRNKPRIR (100 aa)).

This sequence belongs to the transcription factor STAT family. In terms of assembly, may interact with sodium-dependent transporter snf-12; the interaction is probably direct.

Its subcellular location is the cytoplasm. It localises to the nucleus. The protein localises to the vesicle. Its function is as follows. Carries out a dual function: signal transduction and activation of transcription. Required, in concert with transcription factor elt-3, for up-regulation of the vacuolar H(+)-ATPase and acceleration of lysosome maturation at molt. As part of the innate immune response to molting and injury of the adult epidermis, positively regulates the expression of epidermal antimicrobial peptides, such as nlp-29. Through positively modulating the expression of epidermal antimicrobial peptides, such as nlp-29, plays a role in resistance to fungal infection and in the response to physical wounding and phorbol ester PMA treatment. Functions cell autonomously in the epidermis, in concert with sodium-dependent transporter snf-12, probably acting at vesicular membranes, downstream of a p38 MAPK/pmk-1 pathway. In Caenorhabditis elegans, this protein is Signal transducer and activator of transcription b.